Reading from the N-terminus, the 343-residue chain is Uroporphyrinogen decarboxylase (343 aa).

Substrate is bound by residues 25 to 29, phenylalanine 44, aspartate 75, tyrosine 150, serine 205, and histidine 320; that span reads RQAGR.

It belongs to the uroporphyrinogen decarboxylase family. Homodimer.

It is found in the cytoplasm. The enzyme catalyses uroporphyrinogen III + 4 H(+) = coproporphyrinogen III + 4 CO2. It functions in the pathway porphyrin-containing compound metabolism; protoporphyrin-IX biosynthesis; coproporphyrinogen-III from 5-aminolevulinate: step 4/4. Its function is as follows. Catalyzes the decarboxylation of four acetate groups of uroporphyrinogen-III to yield coproporphyrinogen-III. In Mesorhizobium japonicum (strain LMG 29417 / CECT 9101 / MAFF 303099) (Mesorhizobium loti (strain MAFF 303099)), this protein is Uroporphyrinogen decarboxylase.